Here is a 286-residue protein sequence, read N- to C-terminus: 2-hydroxy-6-oxononadienedioate/2-hydroxy-6-oxononatrienedioate hydrolase (286 aa).

Positions 36 to 271 (VIMLHGGGPG…RCGHWAQWEH (236 aa)) constitute an AB hydrolase-1 domain. The active-site Proton acceptor is H265.

It belongs to the AB hydrolase superfamily. BphD family. Homodimer.

It carries out the reaction (2Z,4E)-2-hydroxy-6-oxonona-2,4-dienedioate + H2O = (2Z)-2-hydroxypenta-2,4-dienoate + succinate + H(+). The enzyme catalyses (2Z,4E,7E)-2-hydroxy-6-oxonona-2,4,7-trienedioate + H2O = (2Z)-2-hydroxypenta-2,4-dienoate + fumarate + H(+). The protein operates within aromatic compound metabolism; 3-phenylpropanoate degradation. In terms of biological role, catalyzes the cleavage of the C5-C6 bond of 2-hydroxy-6-oxononadienedioate, and probably also 2-hydroxy-6-oxononatrienedioate, a dienol ring fission product of the bacterial meta-cleavage pathway for degradation of phenylpropionic acid. The protein is 2-hydroxy-6-oxononadienedioate/2-hydroxy-6-oxononatrienedioate hydrolase (mhpC) of Comamonas testosteroni (Pseudomonas testosteroni).